The following is a 395-amino-acid chain: S-adenosylmethionine synthase (395 aa).

Residue histidine 16 participates in ATP binding. Residue aspartate 18 coordinates Mg(2+). Glutamate 44 contacts K(+). Glutamate 57 and glutamine 100 together coordinate L-methionine. The interval 100–110 (QSPDIAQGVDR) is flexible loop. Residues 167–169 (DAK), 233–234 (RF), aspartate 242, 248–249 (RK), alanine 265, and lysine 269 contribute to the ATP site. Residue aspartate 242 participates in L-methionine binding. L-methionine is bound at residue lysine 273.

It belongs to the AdoMet synthase family. In terms of assembly, homotetramer; dimer of dimers. Mg(2+) serves as cofactor. Requires K(+) as cofactor.

It localises to the cytoplasm. The catalysed reaction is L-methionine + ATP + H2O = S-adenosyl-L-methionine + phosphate + diphosphate. It functions in the pathway amino-acid biosynthesis; S-adenosyl-L-methionine biosynthesis; S-adenosyl-L-methionine from L-methionine: step 1/1. In terms of biological role, catalyzes the formation of S-adenosylmethionine (AdoMet) from methionine and ATP. The overall synthetic reaction is composed of two sequential steps, AdoMet formation and the subsequent tripolyphosphate hydrolysis which occurs prior to release of AdoMet from the enzyme. This is S-adenosylmethionine synthase from Burkholderia cenocepacia (strain HI2424).